A 92-amino-acid chain; its full sequence is Mediator-associated protein 3 (92 aa).

The DEK-C domain maps to 13–70; it reads KDLRRKIKKTVKKILESSNLYKITEIKAREEASLKLDLDLSQDPYKVIVKEEVENFLE.

Associated with the Mediator complex.

The protein localises to the nucleus. This chain is Mediator-associated protein 3, found in Arabidopsis thaliana (Mouse-ear cress).